A 439-amino-acid chain; its full sequence is Xaa-Pro dipeptidase (439 aa).

Aspartate 244, aspartate 255, histidine 335, glutamate 380, and glutamate 419 together coordinate Mn(2+).

The protein belongs to the peptidase M24B family. Bacterial-type prolidase subfamily. It depends on Mn(2+) as a cofactor.

It carries out the reaction Xaa-L-Pro dipeptide + H2O = an L-alpha-amino acid + L-proline. Splits dipeptides with a prolyl residue in the C-terminal position. This Shewanella amazonensis (strain ATCC BAA-1098 / SB2B) protein is Xaa-Pro dipeptidase.